Consider the following 333-residue polypeptide: Homeobox protein HMX1 (333 aa).

Disordered stretches follow at residues 1–74, 86–109, and 139–204; these read MAQD…STSA, GTEGGGGTRRAAAGGGGGRGAPRC, and CASP…KKKT. Residues 17-30 are compositionally biased toward polar residues; the sequence is DYTQGNTDRSTAAA. Residues 87 to 105 are compositionally biased toward gly residues; sequence TEGGGGTRRAAAGGGGGRG. Residues 144-158 are compositionally biased toward basic and acidic residues; that stretch reads TSDRDSPELPEDTER. Residues 159-176 are compositionally biased toward gly residues; sequence AGGGGRAAARGPAGGRQS. A compositionally biased stretch (acidic residues) spans 181-192; the sequence is EEEEERGEEAGE. The homeobox DNA-binding region spans 201-260; that stretch reads KKKTRTVFSRSQVFQLESTFDVKRYLSSSERAGLAASLHLTETQVKIWFQNRRNKWKRQL. Residues 261-271 carry the HMX family specific domain 1 motif; it reads AADLEAANLSH.

Belongs to the HMX homeobox family.

Its subcellular location is the nucleus. DNA-binding protein that binds to the 5'-CAAG-3' core sequence. May function as a transcriptional repressor. Seems to act as a transcriptional antagonist of NKX2-5. May play an important role in the development of craniofacial structures such as the eye and ear. The sequence is that of Homeobox protein HMX1 (HMX1) from Gallus gallus (Chicken).